The following is a 128-amino-acid chain: 3-aminoacrylate deaminase RutC (128 aa).

This sequence belongs to the RutC family.

The enzyme catalyses (Z)-3-aminoacrylate + H2O + H(+) = 3-oxopropanoate + NH4(+). Its function is as follows. Involved in pyrimidine catabolism. Catalyzes the deamination of 3-aminoacrylate to malonic semialdehyde, a reaction that can also occur spontaneously. RutC may facilitate the reaction and modulate the metabolic fitness, rather than catalyzing essential functions. This is 3-aminoacrylate deaminase RutC from Azorhizobium caulinodans (strain ATCC 43989 / DSM 5975 / JCM 20966 / LMG 6465 / NBRC 14845 / NCIMB 13405 / ORS 571).